Reading from the N-terminus, the 815-residue chain is Calpain-3 (815 aa).

Residues 7–36 form a disordered region; the sequence is ASVAPRTAAEPRSPGPVPHPAQSKATEAGG. The 344-residue stretch at 74 to 417 folds into the Calpain catalytic domain; the sequence is LYVDPEFPPD…FTKLEICNLT (344 aa). Catalysis depends on residues cysteine 129, histidine 334, and asparagine 358. The segment at 418 to 586 is domain III; it reads ADALQSDKLQ…KRNLSEEVEN (169 aa). Residues 587–649 are linker; the sequence is TISVDRPVPI…QESEEQQQFR (63 aa). Residues 605–646 form a disordered region; sequence SNKELGVDQESEEGKGKTSPDKQEQSPQPQPGSSDQESEEQQ. Basic and acidic residues predominate over residues 616–628; sequence EEGKGKTSPDKQE. Residues 629–639 are compositionally biased toward low complexity; sequence QSPQPQPGSSD. 4 EF-hand domains span residues 643–677, 686–719, 716–751, and 781–815; these read EEQQ…VVNK, FTLE…NKIK, NKIK…AGFH, and VRLE…TMYA. Residues 650–815 form a domain IV region; that stretch reads NIFKQIAGDD…LEWLQLTMYA (166 aa). Alanine 656, aspartate 659, glutamate 661, glutamate 666, aspartate 699, aspartate 701, serine 703, lysine 705, glutamate 710, aspartate 729, aspartate 731, serine 733, threonine 735, glutamate 740, aspartate 794, aspartate 796, aspartate 798, and isoleucine 800 together coordinate Ca(2+).

Belongs to the peptidase C2 family. As to quaternary structure, homodimer; via EF-hand domain 4. Interacts with TTN/titin. Interacts with CMYA5; this interaction, which results in CMYA5 proteolysis, may protect CAPN3 from autolysis. Interacts with SIMC1. Interacts with UTP25; the interaction is required for CAPN3 translocation to the nucleolus.

Its subcellular location is the cytoplasm. The protein resides in the nucleus. It localises to the nucleolus. It carries out the reaction Broad endopeptidase activity.. Activated by micromolar concentrations of calcium and inhibited by calpastatin. Its function is as follows. Calcium-regulated non-lysosomal thiol-protease. Proteolytically cleaves CTBP1. Mediates, with UTP25, the proteasome-independent degradation of p53/TP53. The sequence is that of Calpain-3 (CAPN3) from Macaca fascicularis (Crab-eating macaque).